We begin with the raw amino-acid sequence, 345 residues long: Heat-inducible transcription repressor HrcA (345 aa).

This sequence belongs to the HrcA family.

Negative regulator of class I heat shock genes (grpE-dnaK-dnaJ and groELS operons). Prevents heat-shock induction of these operons. The polypeptide is Heat-inducible transcription repressor HrcA (Tetragenococcus halophilus (Pediococcus halophilus)).